The chain runs to 501 residues: Glycerol kinase (501 aa).

Thr-11 is a binding site for ADP. The ATP site is built by Thr-11, Thr-12, and Ser-13. Residue Thr-11 participates in sn-glycerol 3-phosphate binding. Residue Arg-15 coordinates ADP. Residues Arg-81, Glu-82, Tyr-133, and Asp-242 each coordinate sn-glycerol 3-phosphate. Glycerol is bound by residues Arg-81, Glu-82, Tyr-133, Asp-242, and Gln-243. Thr-264 and Gly-307 together coordinate ADP. Positions 264, 307, 311, and 409 each coordinate ATP. ADP-binding residues include Gly-409 and Asn-413.

This sequence belongs to the FGGY kinase family.

It catalyses the reaction glycerol + ATP = sn-glycerol 3-phosphate + ADP + H(+). Its pathway is polyol metabolism; glycerol degradation via glycerol kinase pathway; sn-glycerol 3-phosphate from glycerol: step 1/1. Its activity is regulated as follows. Inhibited by fructose 1,6-bisphosphate (FBP). Its function is as follows. Key enzyme in the regulation of glycerol uptake and metabolism. Catalyzes the phosphorylation of glycerol to yield sn-glycerol 3-phosphate. This Borrelia garinii subsp. bavariensis (strain ATCC BAA-2496 / DSM 23469 / PBi) (Borreliella bavariensis) protein is Glycerol kinase.